A 464-amino-acid chain; its full sequence is ATP-dependent protease ATPase subunit HslU (464 aa).

ATP-binding positions include V18, 60-65 (GVGKTE), D277, E342, and R414.

Belongs to the ClpX chaperone family. HslU subfamily. In terms of assembly, a double ring-shaped homohexamer of HslV is capped on each side by a ring-shaped HslU homohexamer. The assembly of the HslU/HslV complex is dependent on binding of ATP.

The protein resides in the cytoplasm. Its function is as follows. ATPase subunit of a proteasome-like degradation complex; this subunit has chaperone activity. The binding of ATP and its subsequent hydrolysis by HslU are essential for unfolding of protein substrates subsequently hydrolyzed by HslV. HslU recognizes the N-terminal part of its protein substrates and unfolds these before they are guided to HslV for hydrolysis. The chain is ATP-dependent protease ATPase subunit HslU from Lactobacillus delbrueckii subsp. bulgaricus (strain ATCC 11842 / DSM 20081 / BCRC 10696 / JCM 1002 / NBRC 13953 / NCIMB 11778 / NCTC 12712 / WDCM 00102 / Lb 14).